A 96-amino-acid polypeptide reads, in one-letter code: Protein FPV129 (96 aa).

2 consecutive transmembrane segments (helical) span residues 36–56 (IILD…FVII) and 71–91 (LFLL…LYIV).

This sequence belongs to the chordopoxvirinae L2 family.

The protein localises to the virion membrane. It is found in the host cytoplasm. In terms of biological role, early protein involved in early virion morphogenesis. Participates in the formation and elongation of crescent-shaped membrane precursors of immature virions in cytoplasmic factories. This Vertebrata (FPV) protein is Protein FPV129.